A 202-amino-acid polypeptide reads, in one-letter code: Holliday junction resolvase RecU (202 aa).

T85, D87, E100, and Q119 together coordinate Mg(2+).

Belongs to the RecU family. Mg(2+) is required as a cofactor.

It is found in the cytoplasm. The catalysed reaction is Endonucleolytic cleavage at a junction such as a reciprocal single-stranded crossover between two homologous DNA duplexes (Holliday junction).. Endonuclease that resolves Holliday junction intermediates in genetic recombination. Cleaves mobile four-strand junctions by introducing symmetrical nicks in paired strands. Promotes annealing of linear ssDNA with homologous dsDNA. Required for DNA repair, homologous recombination and chromosome segregation. This is Holliday junction resolvase RecU from Streptococcus pyogenes serotype M6 (strain ATCC BAA-946 / MGAS10394).